Reading from the N-terminus, the 474-residue chain is MGICRLTKKDIEGILHILGGIIQIIGIFTLVPCIVSVYYNENTFLNFLIPGLFFSIFGFVLKRATKPKNLKLHHTMVASALAWLIASFIGAIPLYLSIDYFSYVDAVYESMSAWTTTGMTLIPNVEVLPKSILFWRSFQQWIGGVGILVLSALVLARSGTVAYLLYTSEARQERIMPSAIGTIKTIIWIYILYTILGVLLLYLSGLSFWDALNLTMTGISTGGMSISNYSFPYNDFAKIVMIGIMMVGGVMSFSIHHKLLTGKYFNDIQTKYALIVTAFISIIISIKDKVPIIDSLFTVVSAMTSTGFTTINVGNLSSLSLFLIIFLMLIGGGAGTTTGGVKIIRFLVILKALLYEIKEIIYPKSAVIHEHLDDMDLNYRIIREAFVVFFLYCLSSFLTALIFIALGYNPYDSIFDAVSFTSNIGISLGVVTLKTPVIGKIAGIIAMWIGRLEIIPVLVLFATLYFKTLRLLKK.

10 consecutive transmembrane segments (helical) span residues 17 to 39 (ILGGIIQIIGIFTLVPCIVSVYY), 44 to 61 (FLNFLIPGLFFSIFGFVL), 81 to 103 (LAWLIASFIGAIPLYLSIDYFSY), 144 to 166 (GVGILVLSALVLARSGTVAYLLY), 186 to 208 (IIWIYILYTILGVLLLYLSGLSF), 239 to 256 (IVMIGIMMVGGVMSFSIH), 268 to 286 (IQTKYALIVTAFISIIISI), 319 to 341 (LSLFLIIFLMLIGGGAGTTTGGV), 385 to 407 (AFVVFFLYCLSSFLTALIFIALG), and 444 to 466 (IIAMWIGRLEIIPVLVLFATLYF).

The protein belongs to the TrkH potassium transport family.

The protein resides in the cell membrane. This is an uncharacterized protein from Methanocaldococcus jannaschii (strain ATCC 43067 / DSM 2661 / JAL-1 / JCM 10045 / NBRC 100440) (Methanococcus jannaschii).